The following is a 121-amino-acid chain: Basic phospholipase A2 homolog BaTX (121 aa).

Intrachain disulfides connect Cys26–Cys115, Cys28–Cys44, Cys43–Cys95, Cys49–Cys121, Cys50–Cys88, Cys57–Cys81, and Cys75–Cys86. The segment at 105-117 (KKYRYYLKPLCKK) is important for membrane-damaging activities in eukaryotes and bacteria; heparin-binding.

This sequence belongs to the phospholipase A2 family. Group II subfamily. K49 sub-subfamily. In terms of assembly, homodimer; non-covalently linked. In terms of tissue distribution, expressed by the venom gland.

The protein resides in the secreted. Its function is as follows. Snake venom phospholipase A2 homolog that lacks enzymatic activity. Is myotoxic and displays edema-inducing activities. In vitro, produced time-dependent, irreversible neuromuscular blockade in isolated mouse phrenic nerve-diaphragm and chick biventer cervicis preparations. A model of myotoxic mechanism has been proposed: an apo Lys49-PLA2 is activated by the entrance of a hydrophobic molecule (e.g. fatty acid) at the hydrophobic channel of the protein leading to a reorientation of a monomer. This reorientation causes a transition between 'inactive' to 'active' states, causing alignment of C-terminal and membrane-docking sites (MDoS) side-by-side and putting the membrane-disruption sites (MDiS) in the same plane, exposed to solvent and in a symmetric position for both monomers. The MDoS region stabilizes the toxin on membrane by the interaction of charged residues with phospholipid head groups. Subsequently, the MDiS region destabilizes the membrane with penetration of hydrophobic residues. This insertion causes a disorganization of the membrane, allowing an uncontrolled influx of ions (i.e. calcium and sodium), and eventually triggering irreversible intracellular alterations and cell death. The polypeptide is Basic phospholipase A2 homolog BaTX (Bothrops alternatus (Urutu)).